The sequence spans 165 residues: UPF0303 protein BMA1246 (165 aa).

This sequence belongs to the UPF0303 family.

This Burkholderia mallei (strain ATCC 23344) protein is UPF0303 protein BMA1246.